The sequence spans 159 residues: Urease subunit beta 2 (159 aa).

Residues 1 to 23 (MAKEPTEAAHPQPEQTKTNHKAH) are disordered.

Belongs to the urease beta subunit family. In terms of assembly, heterotrimer of UreA (gamma), UreB (beta) and UreC (alpha) subunits. Three heterotrimers associate to form the active enzyme.

Its subcellular location is the cytoplasm. The enzyme catalyses urea + 2 H2O + H(+) = hydrogencarbonate + 2 NH4(+). The protein operates within nitrogen metabolism; urea degradation; CO(2) and NH(3) from urea (urease route): step 1/1. This is Urease subunit beta 2 from Brucella abortus biovar 1 (strain 9-941).